We begin with the raw amino-acid sequence, 548 residues long: Chaperonin GroEL (548 aa).

ATP contacts are provided by residues 30–33 (TLGP), lysine 51, 87–91 (DGTTT), glycine 415, 479–481 (NAA), and aspartate 495.

This sequence belongs to the chaperonin (HSP60) family. In terms of assembly, forms a cylinder of 14 subunits composed of two heptameric rings stacked back-to-back. Interacts with the co-chaperonin GroES.

The protein localises to the cytoplasm. The catalysed reaction is ATP + H2O + a folded polypeptide = ADP + phosphate + an unfolded polypeptide.. In terms of biological role, together with its co-chaperonin GroES, plays an essential role in assisting protein folding. The GroEL-GroES system forms a nano-cage that allows encapsulation of the non-native substrate proteins and provides a physical environment optimized to promote and accelerate protein folding. In Lawsonia intracellularis (strain PHE/MN1-00), this protein is Chaperonin GroEL.